Here is a 415-residue protein sequence, read N- to C-terminus: Tyrosine--tRNA ligase (415 aa).

Residue Tyr34 coordinates L-tyrosine. Positions 39 to 48 (PSADSLHLGN) match the 'HIGH' region motif. The L-tyrosine site is built by Tyr162 and Gln166. Residues 224–228 (KFGKS) carry the 'KMSKS' region motif. Lys227 is a binding site for ATP. Positions 346–413 (IKIIDLLNLA…KRNYFLILWN (68 aa)) constitute an S4 RNA-binding domain.

The protein belongs to the class-I aminoacyl-tRNA synthetase family. TyrS type 1 subfamily. As to quaternary structure, homodimer.

The protein resides in the cytoplasm. The enzyme catalyses tRNA(Tyr) + L-tyrosine + ATP = L-tyrosyl-tRNA(Tyr) + AMP + diphosphate + H(+). Its function is as follows. Catalyzes the attachment of tyrosine to tRNA(Tyr) in a two-step reaction: tyrosine is first activated by ATP to form Tyr-AMP and then transferred to the acceptor end of tRNA(Tyr). The polypeptide is Tyrosine--tRNA ligase (Ureaplasma parvum serovar 3 (strain ATCC 27815 / 27 / NCTC 11736)).